The primary structure comprises 240 residues: UDP-2,3-diacylglucosamine hydrolase (240 aa).

Residues Asp-8, His-10, Asp-41, Asn-79, and His-114 each coordinate Mn(2+). Residue Asn-79 to Arg-80 coordinates substrate. The substrate site is built by Asp-122, Ser-160, Asn-164, Lys-167, and His-195. Residues His-195 and His-197 each coordinate Mn(2+).

The protein belongs to the LpxH family. Mn(2+) serves as cofactor.

Its subcellular location is the cell inner membrane. The enzyme catalyses UDP-2-N,3-O-bis[(3R)-3-hydroxytetradecanoyl]-alpha-D-glucosamine + H2O = 2-N,3-O-bis[(3R)-3-hydroxytetradecanoyl]-alpha-D-glucosaminyl 1-phosphate + UMP + 2 H(+). It participates in glycolipid biosynthesis; lipid IV(A) biosynthesis; lipid IV(A) from (3R)-3-hydroxytetradecanoyl-[acyl-carrier-protein] and UDP-N-acetyl-alpha-D-glucosamine: step 4/6. Its function is as follows. Hydrolyzes the pyrophosphate bond of UDP-2,3-diacylglucosamine to yield 2,3-diacylglucosamine 1-phosphate (lipid X) and UMP by catalyzing the attack of water at the alpha-P atom. Involved in the biosynthesis of lipid A, a phosphorylated glycolipid that anchors the lipopolysaccharide to the outer membrane of the cell. This is UDP-2,3-diacylglucosamine hydrolase from Yersinia enterocolitica serotype O:8 / biotype 1B (strain NCTC 13174 / 8081).